The chain runs to 253 residues: Large ribosomal subunit protein uL4 (253 aa).

The interval 61–107 (GWGSGRGTSHVPRLVNSSRAARVPHARGGRRAHPPKPEADRSEKVNT) is disordered. A compositionally biased stretch (basic residues) spans 82–94 (RVPHARGGRRAHP). Over residues 95–107 (PKPEADRSEKVNT) the composition is skewed to basic and acidic residues.

Belongs to the universal ribosomal protein uL4 family. As to quaternary structure, part of the 50S ribosomal subunit.

One of the primary rRNA binding proteins, this protein initially binds near the 5'-end of the 23S rRNA. It is important during the early stages of 50S assembly. It makes multiple contacts with different domains of the 23S rRNA in the assembled 50S subunit and ribosome. Its function is as follows. Forms part of the polypeptide exit tunnel. The chain is Large ribosomal subunit protein uL4 from Methanosarcina barkeri (strain Fusaro / DSM 804).